The following is a 410-amino-acid chain: MTVKIYGSGGSGTVALPSSKSFTQRYILGSVFLNKSVTLNYVTITGDDSIALDIAQRAGANITMNDSSIKIRTSFTCPSDIYVGESATSYRIALGLLGSAGCITHVKGDPDLAKRPMDPLVKALEANDVHLKLNEDGFYDVDGSESKKRYIEVDGVSSQFVSSMIFYYARKGGGEFLVKNMRSPGYVYITKRVLYDLGYFVNIEKTITINPSGVWKTAIDVEPDYSSLAFFLVLGLLSENVDVRFNIKRMSRIQPDSVLLDMFKDNIAIDRDTLRVLPGIRDRITVDADHNPDLCPPISVIGIFSEHGVEIDNYARLKTKESNRYEGIIDMASRFGAIVEDNGKDLFIKRGDLKDPGTLSYTDHRMIMSAAVAAAASGFEVEIENETKVSKSFPGFFKELSKFANVSESN.

Positions 20, 21, and 25 each coordinate 3-phosphoshikimate. Lys20 is a phosphoenolpyruvate binding site. Arg115 is a phosphoenolpyruvate binding site. Ser157, Ser158, Gln159, Ser183, Asp293, and Lys320 together coordinate 3-phosphoshikimate. Gln159 serves as a coordination point for phosphoenolpyruvate. The Proton acceptor role is filled by Asp293. Residues Arg324, Arg365, and Lys391 each contribute to the phosphoenolpyruvate site.

It belongs to the EPSP synthase family. As to quaternary structure, monomer.

It localises to the cytoplasm. The catalysed reaction is 3-phosphoshikimate + phosphoenolpyruvate = 5-O-(1-carboxyvinyl)-3-phosphoshikimate + phosphate. Its pathway is metabolic intermediate biosynthesis; chorismate biosynthesis. Functionally, catalyzes the transfer of the enolpyruvyl moiety of phosphoenolpyruvate (PEP) to the 5-hydroxyl of shikimate-3-phosphate (S3P) to produce enolpyruvyl shikimate-3-phosphate and inorganic phosphate. The protein is 3-phosphoshikimate 1-carboxyvinyltransferase of Thermoplasma acidophilum (strain ATCC 25905 / DSM 1728 / JCM 9062 / NBRC 15155 / AMRC-C165).